The following is a 135-amino-acid chain: MGCCGSSTVDAEEHLDYSGGNVTLVTDQKNWDNTMEEVAEHGKTVVLKFSAIWCTPCRNAAPLFAELSLKYPDIVFVSVDVDEMPELVTQYDVRATPTFIFMKNNEEIDKLVGGNHEDLQEKFEQLNRPKLYDDV.

Residues 13–128 (EHLDYSGGNV…LQEKFEQLNR (116 aa)) enclose the Thioredoxin domain. Active-site nucleophile residues include C54 and C57. C54 and C57 are oxidised to a cystine.

Belongs to the thioredoxin family. Plant H-type subfamily.

It is found in the cytoplasm. Its function is as follows. Probable thiol-disulfide oxidoreductase that may be involved in the redox regulation of a number of cytosolic enzymes. This Oryza sativa subsp. japonica (Rice) protein is Thioredoxin H5.